The following is a 145-amino-acid chain: Transcription antitermination protein NusB (145 aa).

It belongs to the NusB family.

Involved in transcription antitermination. Required for transcription of ribosomal RNA (rRNA) genes. Binds specifically to the boxA antiterminator sequence of the ribosomal RNA (rrn) operons. The chain is Transcription antitermination protein NusB from Psychromonas ingrahamii (strain DSM 17664 / CCUG 51855 / 37).